The chain runs to 636 residues: C-terminal binding protein AN (636 aa).

The segment at 1–21 (MSKIRSSATMPHRDQPSPASP) is disordered. NAD(+) contacts are provided by residues Ser91, 147-148 (WL), 169-174 (VGRSVS), Asp193, 231-237 (CALTNDT), 258-260 (TGS), Asp284, and 307-311 (RSADY). The disordered stretch occupies residues 341 to 489 (VSDEEVEESE…PLEVMQESSP (149 aa)). A compositionally biased stretch (acidic residues) spans 342-357 (SDEEVEESEASEEEEQ). Over residues 369-384 (ESTSRQQGESTLTSTE) the composition is skewed to polar residues. Basic and acidic residues predominate over residues 385-395 (IVRREASELKE). Positions 398-409 (SPGQQHVSQNTA) are enriched in polar residues. Residues 417–429 (SRSGKKAKKRHSQ) show a composition bias toward basic residues. Positions 430–445 (QKYMQKTDGSSGLNEE) are enriched in polar residues. Over residues 470-480 (SPEDSRSRKTP) the composition is skewed to basic and acidic residues.

The protein belongs to the D-isomer specific 2-hydroxyacid dehydrogenase family. Plant AN subfamily. As to quaternary structure, homodimer. Interacts with KCBP and SUB (via intra-cellular domain); AN is not required for the correct subcellular localization and recycling of SUB. Binds to SOKs proteins polymers (e.g. SOK1, SOK2, SOK3 and SOK4). Interacts with IPGA1 on microtubule upon mechanical stress to regulate microtubule organization. NAD(+) serves as cofactor. Expressed in cotyledons, leaves, roots, stems and floral buds.

It is found in the cytoplasm. The protein resides in the golgi apparatus. It localises to the trans-Golgi network. The protein localises to the cytoskeleton. Functionally, involved in controlling the equilibrium between tubular and stacked structures in the Golgi complex. Required for cortical microtubules (MTs) arrangement that confers cell shape. Cooperatively with IPGA1, negatively regulates cortical microtubules (CMTs) organization in response to mechanical stress and modulates pavement cells morphogenesis leading to puzzle shape, probably in an AAA1/KTN1-dependent manner. Regulates the width of leaves by controlling the polar elongation of leaf cells. Involved in the regulation of trichome branching. Seems to not be able to regulate gene transcription. Regulates epidermal cell divisions and elongation in a non-cell-autonomous manner (regulated by subepidermal cells), but regulates epidermal cell polarity, shape, trichome branching and elongation in a cell-autonomous manner. Negatively regulates growth in the petiole elongation. Prevents lipid peroxidation as a result of abiotic stress response. Is involved in the SUB-dependent signaling mechanism and may act in a membrane trafficking event around the trans-Golgi network. In Arabidopsis thaliana (Mouse-ear cress), this protein is C-terminal binding protein AN.